A 285-amino-acid chain; its full sequence is Probable xyloglucan endotransglucosylase/hydrolase protein 12 (285 aa).

The signal sequence occupies residues 1 to 25 (MAAFATKQSPLLLASLLILIGVATG). The 190-residue stretch at 26-215 (SFYDSFDITW…WTNAPFSASY (190 aa)) folds into the GH16 domain. Catalysis depends on Glu-101, which acts as the Nucleophile. Glu-105 acts as the Proton donor in catalysis. Glu-105 provides a ligand contact to xyloglucan. N-linked (GlcNAc...) asparagine glycosylation is present at Asn-109. Xyloglucan contacts are provided by residues 118–120 (HTN), 128–130 (NRE), 194–195 (DW), and Gly-199. 2 disulfide bridges follow: Cys-224–Cys-235 and Cys-268–Cys-282. Residue Arg-273 coordinates xyloglucan.

This sequence belongs to the glycosyl hydrolase 16 family. XTH group 2 subfamily. Post-translationally, contains at least one intrachain disulfide bond essential for its enzymatic activity. As to expression, root specific.

The protein resides in the secreted. The protein localises to the cell wall. Its subcellular location is the extracellular space. It localises to the apoplast. It carries out the reaction breaks a beta-(1-&gt;4) bond in the backbone of a xyloglucan and transfers the xyloglucanyl segment on to O-4 of the non-reducing terminal glucose residue of an acceptor, which can be a xyloglucan or an oligosaccharide of xyloglucan.. In terms of biological role, catalyzes xyloglucan endohydrolysis (XEH) and/or endotransglycosylation (XET). Cleaves and religates xyloglucan polymers, an essential constituent of the primary cell wall, and thereby participates in cell wall construction of growing tissues. In Arabidopsis thaliana (Mouse-ear cress), this protein is Probable xyloglucan endotransglucosylase/hydrolase protein 12 (XTH12).